Here is a 69-residue protein sequence, read N- to C-terminus: Small, acid-soluble spore protein I (69 aa).

The protein belongs to the SspI family.

It is found in the spore core. This chain is Small, acid-soluble spore protein I, found in Bacillus mycoides (strain KBAB4) (Bacillus weihenstephanensis).